Here is a 62-residue protein sequence, read N- to C-terminus: Large ribosomal subunit protein eL24 (62 aa).

Residues C7, C10, C33, and C37 each coordinate Zn(2+). Residues 7–37 (CSFCGKDILPGTGLMYVRNDGSLLWFCSSKC) form a C4-type zinc finger.

The protein belongs to the eukaryotic ribosomal protein eL24 family. Part of the 50S ribosomal subunit. Forms a cluster with proteins L3 and L14. Zn(2+) serves as cofactor.

Binds to the 23S rRNA. The chain is Large ribosomal subunit protein eL24 from Sulfolobus acidocaldarius (strain ATCC 33909 / DSM 639 / JCM 8929 / NBRC 15157 / NCIMB 11770).